The primary structure comprises 253 residues: Isopentenyl-diphosphate delta-isomerase IDI1 (253 aa).

Lys-61 serves as a coordination point for substrate. Positions 65 and 76 each coordinate Mg(2+). The Nudix hydrolase domain maps to 74 to 224 (LLHRAFSVFL…SLVFTPWFKL (151 aa)). Residues Gln-94 and Lys-99 each coordinate substrate. Residue Cys-111 is part of the active site. Substrate is bound at residue Ser-112. The Nudix box motif lies at 112-145 (SHPLHIPTETGSTLEDSIAGVKRAAQRKLEHELG). 2 residues coordinate Mg(2+): Glu-174 and Glu-176. Residue Glu-176 is part of the active site.

It belongs to the IPP isomerase type 1 family. Requires Mg(2+) as cofactor.

It catalyses the reaction isopentenyl diphosphate = dimethylallyl diphosphate. It functions in the pathway isoprenoid biosynthesis; dimethylallyl diphosphate biosynthesis; dimethylallyl diphosphate from isopentenyl diphosphate: step 1/1. In terms of biological role, isopentenyl-diphosphate delta-isomerase; part of the second module of ergosterol biosynthesis pathway that includes the middle steps of the pathway. IDI1 catalyzes the 1,3-allylic rearrangement of isopentenyl (IPP) to its highly electrophilic allylic isomer, dimethylallyl diphosphate (DMAPP). The second module is carried out in the vacuole and involves the formation of farnesyl diphosphate, which is also an important intermediate in the biosynthesis of ubiquinone, dolichol, heme and prenylated proteins. Activity by the mevalonate kinase ERG12 (FG05912) first converts mevalonate into 5-phosphomevalonate. 5-phosphomevalonate is then further converted to 5-diphosphomevalonate by the phosphomevalonate kinase ERG8 (FG09764). The diphosphomevalonate decarboxylase ERG19 (FG10424) then produces isopentenyl diphosphate. The isopentenyl-diphosphate delta-isomerase IDI1 (FG09722) then catalyzes the 1,3-allylic rearrangement of the homoallylic substrate isopentenyl (IPP) to its highly electrophilic allylic isomer, dimethylallyl diphosphate (DMAPP). Finally the farnesyl diphosphate synthase ERG20 (FG06784) catalyzes the sequential condensation of isopentenyl pyrophosphate with dimethylallyl pyrophosphate, and then with the resultant geranylpyrophosphate to the ultimate product farnesyl pyrophosphate. The chain is Isopentenyl-diphosphate delta-isomerase IDI1 from Gibberella zeae (strain ATCC MYA-4620 / CBS 123657 / FGSC 9075 / NRRL 31084 / PH-1) (Wheat head blight fungus).